Consider the following 375-residue polypeptide: Geranylgeranyl transferase type-1 subunit beta (375 aa).

Positions 1–33 (MSETAVSIDSDRSKSEEEDEEEYSPPVQSSPSA) are disordered. S2 carries the post-translational modification N-acetylserine. PFTB repeat units lie at residues 157–199 (SKSL…YMLD), 206–247 (KESA…RLMG), 265–306 (PSLL…KLIG), and 313–354 (KMAL…SLLE). Geranylgeranyl diphosphate-binding positions include 232–234 (HGG) and 285–288 (RTNK). Positions 291 and 293 each coordinate Zn(2+). 294-297 (YAFW) serves as a coordination point for geranylgeranyl diphosphate. H342 contributes to the Zn(2+) binding site.

The protein belongs to the protein prenyltransferase subunit beta family. Heterodimer of an alpha and a beta subunit. The cofactor is Zn(2+). Requires Mg(2+) as cofactor. As to expression, expressed in roots, leaves, stems, flowers and siliques.

The catalysed reaction is geranylgeranyl diphosphate + L-cysteinyl-[protein] = S-geranylgeranyl-L-cysteinyl-[protein] + diphosphate. Functionally, catalyzes the transfer of a geranyl-geranyl moiety from geranyl-geranyl pyrophosphate to a cysteine at the fourth position from the C-terminus of proteins having the C-terminal sequence Cys-aliphatic-aliphatic-X (CaaX). Seems to exclusively prenylate CaaX substrates with leucine in the terminal position. The beta subunit is responsible for peptide-binding. May negatively regulate abscisic acid (ABA) signaling in guard cells and auxin-induced lateral root initiation. In terms of biological role, negatively regulates ABA signaling in guard cells. in negative regulation of auxin-induced lateral root initiation. In Arabidopsis thaliana (Mouse-ear cress), this protein is Geranylgeranyl transferase type-1 subunit beta (GGB).